The chain runs to 349 residues: MHQSLTQQRSSDMSLPDSMGAFNRRKRNSIYVTVTLLIVSVLILTVGLAATTRTQNVTVGGYYPGVILGFGSFLGIIGSNLIENKRQMLVASIVFISFGVIAAFCCAIVDGVFAARHIDLKPLYANRCHYVPKTSQKEAEEVISSSTKNSPSTRVMRNLTQAAREVNCPHLSREFCTPRIRGNTCFCCDLYNCGNRVEITGGYYEYIDVSSCQDIIHLYHLLWSATILNIVGLFLGIITAAVLGGFKDMNPTLPALNCSVENTHPTVSYYAHPQVASYNTYYHSPPHLPPYSAYDFQHSGVFPSSPPSGLSDEPQSASPSPSYMWSSSAPPRYSPPYYPPFEKPPPYSP.

A run of 4 helical transmembrane segments spans residues isoleucine 30 to alanine 50, valine 57 to isoleucine 77, leucine 89 to valine 109, and threonine 226 to phenylalanine 246. The tract at residues proline 303–alanine 329 is disordered. A compositionally biased stretch (low complexity) spans serine 316–alanine 329.

It belongs to the TMEM255 family.

The protein localises to the membrane. The protein is Transmembrane protein 255A (TMEM255A) of Homo sapiens (Human).